Consider the following 217-residue polypeptide: uncharacterized protein (217 aa).

7 consecutive transmembrane segments (helical) span residues 4 to 23 (IYGIFAFVVLVFFYLLGKET), 44 to 66 (NVVILSVIAFIGVGIFTAYLTWV), 76 to 98 (TVETAGLTATAFLLGGIFGSIII), 111 to 128 (FLYLCFIISAVLFYIHAI), 132 to 154 (MAMVAAVLFVLGFFFISALPLAL), 166 to 188 (AGTANSSLWLFSQVGSVVLIVLF), and 198 to 215 (LLLSAGLLAVSFLLALQL).

The protein resides in the cell membrane. This is an uncharacterized protein from Archaeoglobus fulgidus (strain ATCC 49558 / DSM 4304 / JCM 9628 / NBRC 100126 / VC-16).